The following is a 250-amino-acid chain: 2,3-bisphosphoglycerate-dependent phosphoglycerate mutase (250 aa).

Residues 8–15 (RHGESQWN), 21–22 (TG), arginine 60, 87–90 (ERHY), lysine 98, 114–115 (RR), and 183–184 (GN) contribute to the substrate site. The active-site Tele-phosphohistidine intermediate is the histidine 9. The active-site Proton donor/acceptor is the glutamate 87.

It belongs to the phosphoglycerate mutase family. BPG-dependent PGAM subfamily. In terms of assembly, homodimer.

The enzyme catalyses (2R)-2-phosphoglycerate = (2R)-3-phosphoglycerate. It participates in carbohydrate degradation; glycolysis; pyruvate from D-glyceraldehyde 3-phosphate: step 3/5. Functionally, catalyzes the interconversion of 2-phosphoglycerate and 3-phosphoglycerate. In Bordetella petrii (strain ATCC BAA-461 / DSM 12804 / CCUG 43448), this protein is 2,3-bisphosphoglycerate-dependent phosphoglycerate mutase.